We begin with the raw amino-acid sequence, 31 residues long: Cyclotide Hyfl-A (31 aa).

The segment at residues 1–31 (SISCGESCVYIPCTVTALVGCTCKDKVCYLN) is a cross-link (cyclopeptide (Ser-Asn)). 3 disulfide bridges follow: cysteine 4–cysteine 21, cysteine 8–cysteine 23, and cysteine 13–cysteine 28.

It belongs to the cyclotide family. Bracelet subfamily. Post-translationally, this is a cyclic peptide.

In terms of biological role, probably participates in a plant defense mechanism. The sequence is that of Cyclotide Hyfl-A from Hybanthus floribundus (Greenviolet).